Reading from the N-terminus, the 409-residue chain is NADH-ubiquinone oxidoreductase chain 4 (409 aa).

13 consecutive transmembrane segments (helical) span residues 10–30, 44–64, 76–96, 98–118, 120–140, 160–180, 194–214, 221–241, 245–265, 271–291, 305–325, 353–373, and 389–409; these read LWLF…FLIF, SYSF…IVIS, ILVF…LYMF, ELSM…IEKI, SSYY…FVYF, FFIL…HLWL, LLAG…LGSL, VWIL…VFQS, ALAA…LVFI, ISSV…FYLI, FMSS…VVFL, MFVM…FLIT, and VGFS…SVFY.

It belongs to the complex I subunit 4 family.

Its subcellular location is the mitochondrion membrane. It catalyses the reaction a ubiquinone + NADH + 5 H(+)(in) = a ubiquinol + NAD(+) + 4 H(+)(out). In terms of biological role, core subunit of the mitochondrial membrane respiratory chain NADH dehydrogenase (Complex I) that is believed to belong to the minimal assembly required for catalysis. Complex I functions in the transfer of electrons from NADH to the respiratory chain. The immediate electron acceptor for the enzyme is believed to be ubiquinone. The protein is NADH-ubiquinone oxidoreductase chain 4 of Caenorhabditis elegans.